Reading from the N-terminus, the 300-residue chain is 2-dehydropantoate 2-reductase (300 aa).

NADP(+) contacts are provided by residues 7-12 (GAGAIG), lysine 74, asparagine 99, and alanine 123. Lysine 179 functions as the Proton donor in the catalytic mechanism. Residues lysine 179, asparagine 183, asparagine 187, asparagine 197, and 246 to 249 (NYNS) each bind substrate. Glutamate 261 is a binding site for NADP(+).

It belongs to the ketopantoate reductase family.

Its subcellular location is the cytoplasm. The catalysed reaction is (R)-pantoate + NAD(+) = 2-dehydropantoate + NADH + H(+). It catalyses the reaction (R)-pantoate + NADP(+) = 2-dehydropantoate + NADPH + H(+). It functions in the pathway cofactor biosynthesis; coenzyme A biosynthesis. Functionally, catalyzes the NAD(P)H-dependent reduction of ketopantoate into pantoic acid. The chain is 2-dehydropantoate 2-reductase (apbA) from Pyrococcus abyssi (strain GE5 / Orsay).